The chain runs to 294 residues: 4-hydroxy-tetrahydrodipicolinate synthase (294 aa).

Thr-47 provides a ligand contact to pyruvate. Catalysis depends on Tyr-135, which acts as the Proton donor/acceptor. Lys-163 functions as the Schiff-base intermediate with substrate in the catalytic mechanism. Val-205 is a binding site for pyruvate.

It belongs to the DapA family. As to quaternary structure, homotetramer; dimer of dimers.

The protein resides in the cytoplasm. The catalysed reaction is L-aspartate 4-semialdehyde + pyruvate = (2S,4S)-4-hydroxy-2,3,4,5-tetrahydrodipicolinate + H2O + H(+). Its pathway is amino-acid biosynthesis; L-lysine biosynthesis via DAP pathway; (S)-tetrahydrodipicolinate from L-aspartate: step 3/4. In terms of biological role, catalyzes the condensation of (S)-aspartate-beta-semialdehyde [(S)-ASA] and pyruvate to 4-hydroxy-tetrahydrodipicolinate (HTPA). This is 4-hydroxy-tetrahydrodipicolinate synthase from Rickettsia bellii (strain RML369-C).